Consider the following 435-residue polypeptide: Enolase (435 aa).

H155 and E164 together coordinate substrate. The Proton donor role is filled by E205. Mg(2+)-binding residues include D243, E292, and D319. Substrate is bound by residues E292, D319, K344, 371–374 (SHRS), and K395. The active-site Proton acceptor is K344.

Belongs to the enolase family. Homooctamer. The cofactor is Mg(2+).

Its subcellular location is the cytoplasm. It is found in the secreted. The protein resides in the cell surface. It catalyses the reaction (2R)-2-phosphoglycerate = phosphoenolpyruvate + H2O. It participates in carbohydrate degradation; glycolysis; pyruvate from D-glyceraldehyde 3-phosphate: step 4/5. Its function is as follows. Catalyzes the reversible conversion of 2-phosphoglycerate (2-PG) into phosphoenolpyruvate (PEP). It is essential for the degradation of carbohydrates via glycolysis. Functionally, 'Moonlights' as a plasminogen receptor and plasmin activator. Binds host (human) plasminogen in vitro; enhances the activity of host tissue-specific plasminogen activator (tPA). This chain is Enolase, found in Streptococcus pyogenes serotype M1.